Consider the following 470-residue polypeptide: Ribulose bisphosphate carboxylase large chain (470 aa).

Substrate-binding residues include Asn-115 and Thr-165. Lys-167 (proton acceptor) is an active-site residue. Residue Lys-169 coordinates substrate. Mg(2+) contacts are provided by Lys-193, Asp-195, and Glu-196. Lys-193 carries the post-translational modification N6-carboxylysine. Catalysis depends on His-286, which acts as the Proton acceptor. Residues Arg-287, His-319, and Ser-371 each contribute to the substrate site.

Belongs to the RuBisCO large chain family. Type I subfamily. As to quaternary structure, heterohexadecamer of 8 large chains and 8 small chains. Mg(2+) is required as a cofactor.

Its subcellular location is the carboxysome. The catalysed reaction is 2 (2R)-3-phosphoglycerate + 2 H(+) = D-ribulose 1,5-bisphosphate + CO2 + H2O. It carries out the reaction D-ribulose 1,5-bisphosphate + O2 = 2-phosphoglycolate + (2R)-3-phosphoglycerate + 2 H(+). RuBisCO catalyzes two reactions: the carboxylation of D-ribulose 1,5-bisphosphate, the primary event in carbon dioxide fixation, as well as the oxidative fragmentation of the pentose substrate in the photorespiration process. Both reactions occur simultaneously and in competition at the same active site. The chain is Ribulose bisphosphate carboxylase large chain from Synechococcus sp. (strain CC9902).